A 273-amino-acid polypeptide reads, in one-letter code: Putative phosphoenolpyruvate synthase regulatory protein (273 aa).

153–160 (GVSRSGKT) contributes to the ADP binding site.

It belongs to the pyruvate, phosphate/water dikinase regulatory protein family. PSRP subfamily.

It carries out the reaction [pyruvate, water dikinase] + ADP = [pyruvate, water dikinase]-phosphate + AMP + H(+). The enzyme catalyses [pyruvate, water dikinase]-phosphate + phosphate + H(+) = [pyruvate, water dikinase] + diphosphate. Bifunctional serine/threonine kinase and phosphorylase involved in the regulation of the phosphoenolpyruvate synthase (PEPS) by catalyzing its phosphorylation/dephosphorylation. This chain is Putative phosphoenolpyruvate synthase regulatory protein, found in Verminephrobacter eiseniae (strain EF01-2).